A 669-amino-acid polypeptide reads, in one-letter code: Cysteine-rich receptor-like protein kinase 10 (669 aa).

The N-terminal stretch at Met1–Ala34 is a signal peptide. Over Gln35–Lys285 the chain is Extracellular. Gnk2-homologous domains follow at residues Thr38–Ile142 and Thr148–Phe252. Residues Asn49, Asn53, Asn71, and Asn80 are each glycosylated (N-linked (GlcNAc...) asparagine). Disulfide bonds link Cys96-Cys105 and Cys108-Cys133. N-linked (GlcNAc...) asparagine glycans are attached at residues Asn114, Asn159, Asn185, and Asn196. 2 disulfides stabilise this stretch: Cys209–Cys218 and Cys221–Cys243. The span at Pro260–Ala274 shows a compositional bias: pro residues. The disordered stretch occupies residues Pro260–Lys280. The helical transmembrane segment at Val286–Tyr306 threads the bilayer. Over Cys307–Arg669 the chain is Cytoplasmic. The 287-residue stretch at Phe348–Leu634 folds into the Protein kinase domain. Residues Ile354 to Val362 and Lys376 each bind ATP. Tyr421 is modified (phosphotyrosine). Residue Asp473 is the Proton acceptor of the active site. Ser477 is subject to Phosphoserine. Thr513 carries the phosphothreonine modification. The residue at position 521 (Tyr521) is a Phosphotyrosine.

It belongs to the protein kinase superfamily. Ser/Thr protein kinase family. CRK subfamily. Interacts with CRKIP1 (KAPP), CRKIP2 and CRKIP3, three kinase-associated type 2C proteins.

It localises to the membrane. The catalysed reaction is L-seryl-[protein] + ATP = O-phospho-L-seryl-[protein] + ADP + H(+). It carries out the reaction L-threonyl-[protein] + ATP = O-phospho-L-threonyl-[protein] + ADP + H(+). This is Cysteine-rich receptor-like protein kinase 10 (CRK10) from Arabidopsis thaliana (Mouse-ear cress).